The sequence spans 754 residues: Glutathione biosynthesis bifunctional protein GshAB (754 aa).

The interval 1 to 332 (MTLNQLLQKL…QGHALNEKIA (332 aa)) is glutamate--cysteine ligase. One can recognise an ATP-grasp domain in the interval 488-746 (KKILADAGFP…ITTKILDKLF (259 aa)). 515–573 (PLIKDKQIVVKPKSTNFGLGISIFQEPASLDNYQKALEIAFAEDTSVLVEEFIPGTEYR) is a binding site for ATP. The Mg(2+) site is built by aspartate 695, glutamate 716, and asparagine 718. Aspartate 695, glutamate 716, and asparagine 718 together coordinate Mn(2+).

In the N-terminal section; belongs to the glutamate--cysteine ligase type 1 family. Type 2 subfamily. Monomer. Requires Mg(2+) as cofactor. Mn(2+) is required as a cofactor.

It catalyses the reaction L-cysteine + L-glutamate + ATP = gamma-L-glutamyl-L-cysteine + ADP + phosphate + H(+). The catalysed reaction is gamma-L-glutamyl-L-cysteine + glycine + ATP = glutathione + ADP + phosphate + H(+). It participates in sulfur metabolism; glutathione biosynthesis; glutathione from L-cysteine and L-glutamate: step 1/2. Its pathway is sulfur metabolism; glutathione biosynthesis; glutathione from L-cysteine and L-glutamate: step 2/2. In terms of biological role, synthesizes glutathione from L-glutamate and L-cysteine via gamma-L-glutamyl-L-cysteine. This is Glutathione biosynthesis bifunctional protein GshAB from Streptococcus thermophilus (strain CNRZ 1066).